Consider the following 105-residue polypeptide: DNA-directed RNA polymerase subunit Rpo13 (105 aa).

Composition is skewed to basic and acidic residues over residues 1 to 10 (MSEDDSKKEP) and 70 to 80 (FDDVARSYSKA). 2 disordered regions span residues 1–35 (MSEDDSKKEPEPEETEAEIKHEEISREEDDEGGEF) and 70–105 (FDDVARSYSKADKKKRRVEKKPKKGKVTKKSDEEEE). Residues 81-97 (DKKKRRVEKKPKKGKVT) are compositionally biased toward basic residues.

It belongs to the archaeal Rpo13 RNA polymerase subunit family. As to quaternary structure, part of the 13-subunit RNA polymerase.

It is found in the cytoplasm. The enzyme catalyses RNA(n) + a ribonucleoside 5'-triphosphate = RNA(n+1) + diphosphate. DNA-dependent RNA polymerase catalyzes the transcription of DNA into RNA using the four ribonucleoside triphosphates as substrates. In vitro binds dsDNA but not ssDNA. This Sulfolobus acidocaldarius (strain ATCC 33909 / DSM 639 / JCM 8929 / NBRC 15157 / NCIMB 11770) protein is DNA-directed RNA polymerase subunit Rpo13.